A 2564-amino-acid polypeptide reads, in one-letter code: Highly reducing polyketide synthase 40 (2564 aa).

One can recognise a Ketosynthase family 3 (KS3) domain in the interval 8–432 (PEPIAIIGMS…GTNAHVIVDR (425 aa)). Active-site for beta-ketoacyl synthase activity residues include Cys181, His317, and His358. The disordered stretch occupies residues 435–482 (EHNHSNGTNGTNGTHHHNGTNGSNGNGTNGTNGTNGTDGFHDTESISD). Positions 439–455 (SNGTNGTNGTHHHNGTN) are enriched in low complexity. Over residues 473-482 (GFHDTESISD) the composition is skewed to basic and acidic residues. The segment at 580 to 914 (YVFGGQGAQY…SAAENMLRTL (335 aa)) is malonyl-CoA:ACP transacylase (MAT) domain. An N-terminal hotdog fold region spans residues 973 to 1113 (HELLGNLSAD…GRIRAVVDQG (141 aa)). The dehydratase (DH) domain stretch occupies residues 973–1280 (HELLGNLSAD…GLRTAQLPSD (308 aa)). A PKS/mFAS DH domain is found at 973–1283 (HELLGNLSAD…TAQLPSDVVN (311 aa)). Residue His1005 is the Proton acceptor; for dehydratase activity of the active site. The segment at 1130-1283 (AASVPHHITS…TAQLPSDVVN (154 aa)) is C-terminal hotdog fold. Residue Asp1199 is the Proton donor; for dehydratase activity of the active site. Residues 1451–1556 (LEVGGGTASA…RQLLRPGGTL (106 aa)) are methyltransferase (CMet) domain. The segment at 1854-2167 (GLLETFRWVD…AGKHMGKVIL (314 aa)) is enoyl reductase (ER) domain. Positions 2191-2370 (ATYLLVGGFG…SFAIDVGVVS (180 aa)) are ketoreductase (KR) domain. Positions 2472 to 2549 (EALDAVGQAV…ELIHLVAGKS (78 aa)) constitute a Carrier domain. Ser2509 bears the O-(pantetheine 4'-phosphoryl)serine mark.

It functions in the pathway secondary metabolite biosynthesis. In terms of biological role, highly reducing polyketide synthase; part of the gene cluster that mediates the biosynthesis of the lipopeptides W493 A and B. W493 A and B consist of six amino acid residues D-allo-thr, L-Ala, D-Ala, L-Gln, D-Tyr, and L-Val/L-Ile linked to a 3-hydroxy-4-methyltetradecanoic acid polyketide chain. The biosynthesis starts with formation of the linear polyketide chain by the highly reducing polyketide synthase PKS40. The gene cluster contains a putative acyl-CoA ligase (FPSE_09184) for formation of a CoA thioester polyketide. The thiol bond could be hydrolyzed by the putative thioesterase (FPSE_09186) and then accepted by the first T domain in module 1 of NRPS32. The second T domain is responsible for accepting a threonine, which is adenylated by the A domain and epimerized to the D-allo-threonine formed by the E domain. The five successive modules incorporate Ala, Ala, Gln, Tyr, and Val/Ile into the final product, which is released by cyclization. This Fusarium pseudograminearum (strain CS3096) (Wheat and barley crown-rot fungus) protein is Highly reducing polyketide synthase 40.